Here is a 206-residue protein sequence, read N- to C-terminus: N-(5'-phosphoribosyl)anthranilate isomerase (206 aa).

Belongs to the TrpF family.

The enzyme catalyses N-(5-phospho-beta-D-ribosyl)anthranilate = 1-(2-carboxyphenylamino)-1-deoxy-D-ribulose 5-phosphate. It functions in the pathway amino-acid biosynthesis; L-tryptophan biosynthesis; L-tryptophan from chorismate: step 3/5. The protein is N-(5'-phosphoribosyl)anthranilate isomerase of Pseudomonas syringae pv. tomato (strain ATCC BAA-871 / DC3000).